The following is a 37-amino-acid chain: Large ribosomal subunit protein bL36 (37 aa).

Belongs to the bacterial ribosomal protein bL36 family.

In Acetivibrio thermocellus (strain ATCC 27405 / DSM 1237 / JCM 9322 / NBRC 103400 / NCIMB 10682 / NRRL B-4536 / VPI 7372) (Clostridium thermocellum), this protein is Large ribosomal subunit protein bL36.